The sequence spans 183 residues: MDQAKLARMQASVRIGTFYSFLWIFEVLVSESVFLRMTATNFIDRGKGTPRRKVKKVHKSSGADDKKLQTTLKKMNVQPIQAIEEVNMFKEDGNVIHFAAPKVHASVPSNTFALYGNGEEKELTELVPGILNQLGPDSLASLRKLAESYQNMQKQAGTEGKKDEDEDDIPDLVEGENFESNVE.

The region spanning 62-127 is the NAC-A/B domain; the sequence is GADDKKLQTT…GEEKELTELV (66 aa). Residues 150–183 are disordered; the sequence is QNMQKQAGTEGKKDEDEDDIPDLVEGENFESNVE. Residues 164-183 are compositionally biased toward acidic residues; the sequence is EDEDDIPDLVEGENFESNVE.

It belongs to the NAC-beta family. Part of the nascent polypeptide-associated complex (NAC), consisting of egd2 and egd1. NAC associates with ribosomes via egd1.

The protein localises to the cytoplasm. It localises to the nucleus. In terms of biological role, component of the nascent polypeptide-associated complex (NAC), a dynamic component of the ribosomal exit tunnel, protecting the emerging polypeptides from interaction with other cytoplasmic proteins to ensure appropriate nascent protein targeting. The NAC complex also promotes mitochondrial protein import by enhancing productive ribosome interactions with the outer mitochondrial membrane and blocks the inappropriate interaction of ribosomes translating non-secretory nascent polypeptides with translocation sites in the membrane of the endoplasmic reticulum. EGD1 may act as a transcription factor that exert a negative effect on the expression of several genes that are transcribed by RNA polymerase II. This chain is Nascent polypeptide-associated complex subunit beta (egd1), found in Neosartorya fischeri (strain ATCC 1020 / DSM 3700 / CBS 544.65 / FGSC A1164 / JCM 1740 / NRRL 181 / WB 181) (Aspergillus fischerianus).